We begin with the raw amino-acid sequence, 415 residues long: Serine--tRNA ligase (415 aa).

Residue 231–233 (TAE) coordinates L-serine. 262–264 (RSE) serves as a coordination point for ATP. Position 285 (Glu285) interacts with L-serine. An ATP-binding site is contributed by 349-352 (EISS). An L-serine-binding site is contributed by Ser383.

This sequence belongs to the class-II aminoacyl-tRNA synthetase family. Type-1 seryl-tRNA synthetase subfamily. As to quaternary structure, homodimer. The tRNA molecule binds across the dimer.

The protein resides in the cytoplasm. The catalysed reaction is tRNA(Ser) + L-serine + ATP = L-seryl-tRNA(Ser) + AMP + diphosphate + H(+). It catalyses the reaction tRNA(Sec) + L-serine + ATP = L-seryl-tRNA(Sec) + AMP + diphosphate + H(+). Its pathway is aminoacyl-tRNA biosynthesis; selenocysteinyl-tRNA(Sec) biosynthesis; L-seryl-tRNA(Sec) from L-serine and tRNA(Sec): step 1/1. In terms of biological role, catalyzes the attachment of serine to tRNA(Ser). Is also able to aminoacylate tRNA(Sec) with serine, to form the misacylated tRNA L-seryl-tRNA(Sec), which will be further converted into selenocysteinyl-tRNA(Sec). The sequence is that of Serine--tRNA ligase from Helicobacter pylori (strain Shi470).